We begin with the raw amino-acid sequence, 92 residues long: Large ribosomal subunit protein bL27 (92 aa).

Positions 1–10 (MLLQLQIQLF) are excised as a propeptide.

Belongs to the bacterial ribosomal protein bL27 family. Post-translationally, the N-terminus is cleaved by ribosomal processing cysteine protease Prp.

This chain is Large ribosomal subunit protein bL27, found in Aster yellows witches'-broom phytoplasma (strain AYWB).